The primary structure comprises 208 residues: Small ribosomal subunit protein uS3 (208 aa).

Residues 17–86 (IDEYLEKELR…NPQIEVEEIK (70 aa)) enclose the KH type-2 domain.

The protein belongs to the universal ribosomal protein uS3 family. Part of the 30S ribosomal subunit.

Functionally, binds the lower part of the 30S subunit head. This Thermococcus onnurineus (strain NA1) protein is Small ribosomal subunit protein uS3.